The primary structure comprises 178 residues: Ribonuclease M5 (178 aa).

The Toprim domain maps to 10 to 103 (DGVIVCEGKT…NSTKIGVAEA (94 aa)). Mg(2+) contacts are provided by Glu-16, Asp-62, and Asp-64.

It belongs to the ribonuclease M5 family. It depends on Mg(2+) as a cofactor.

Its subcellular location is the cytoplasm. The enzyme catalyses Endonucleolytic cleavage of RNA, removing 21 and 42 nucleotides, respectively, from the 5'- and 3'-termini of a 5S-rRNA precursor.. In terms of biological role, required for correct processing of both the 5' and 3' ends of 5S rRNA precursor. Cleaves both sides of a double-stranded region yielding mature 5S rRNA in one step. The chain is Ribonuclease M5 from Mycoplasma pneumoniae (strain ATCC 29342 / M129 / Subtype 1) (Mycoplasmoides pneumoniae).